A 357-amino-acid polypeptide reads, in one-letter code: Spermatogenesis- and oogenesis-specific basic helix-loop-helix-containing protein 1 (357 aa).

Residues 1-14 (MASGGHERANEDYR) are compositionally biased toward basic and acidic residues. A disordered region spans residues 1 to 40 (MASGGHERANEDYRVSGITGCSKTPQPETQDSLQTSSQSS). A compositionally biased stretch (polar residues) spans 19 to 31 (TGCSKTPQPETQD). Residues 54 to 105 (PSLRRNVVSERERRRRISLSCEHLRALLPQFDGRREDMASVLEMSVYFLQLA) enclose the bHLH domain. Residues 145 to 210 (KPDSGIAKPS…EPESSSLGPG (66 aa)) form a disordered region. Positions 200–209 (SEPESSSLGP) are enriched in low complexity.

As to quaternary structure, forms both hetero- and homodimers with SOHLH2. In males, it is mainly expressed in testis, while in females it is mainly expressed in ovary. In testis, it is exclusively expressed in spermatogonia, with a preference for prespermatogonia and type A spermatogonia. In ovary, it is detected in germ cell cysts, primordial follicles, and primary follicles but is undetectable by the secondary follicle stage (at protein level). Expressed in the majority of spermatogonia in adult animals, but not in the most undifferentiated spermatogonial population.

The protein localises to the cytoplasm. It is found in the nucleus. Its function is as follows. Transcription regulator of both male and female germline differentiation. Suppresses genes involved in spermatogonial stem cells maintenance, and induces genes important for spermatogonial differentiation. Coordinates oocyte differentiation without affecting meiosis I. In Mus musculus (Mouse), this protein is Spermatogenesis- and oogenesis-specific basic helix-loop-helix-containing protein 1 (Sohlh1).